A 776-amino-acid chain; its full sequence is Palmitoyltransferase AKR1 (776 aa).

The Cytoplasmic segment spans residues 1-311 (MDQEMTTVAS…MEGKLGPRNT (311 aa)). The tract at residues 38–58 (RLDEGSSIRGGELERDSQEVG) is disordered. ANK repeat units follow at residues 68–97 (CHDL…SLNL), 103–132 (QDVT…DIDA), 137–166 (LKAT…DPNI), 170–199 (QGFN…AIDE), 203–232 (DGHT…SVNS), and 236–265 (AGMT…SLDA). The helical transmembrane segment at 312–332 (ILAIFLLPIAVLWLIFSTFKW) threads the bilayer. The Lumenal portion of the chain corresponds to 333 to 336 (LPVY). The chain crosses the membrane as a helical span at residues 337–357 (VGVPFAIAEFMGMQYTVVLVL). The Cytoplasmic portion of the chain corresponds to 358–368 (LGHIKAQDKVS). A helical membrane pass occupies residues 369–389 (TSNYFASIITASLIWVGYCWI). Topologically, residues 390–402 (SRFAVNTPGYAFS) are lumenal. Residues 403–423 (NLGFIIMFVGCCWTFWTAIVT) traverse the membrane as a helical segment. Over 424–498 (DPGFVPKGQQ…NCVGAKNHRS (75 aa)) the chain is Cytoplasmic. Residues 454-504 (NFCIVCMARKPLRSKHCRTCNRCVARFDHHCPWIWNCVGAKNHRSFLLFVL) enclose the DHHC domain. Cys-484 serves as the catalytic S-palmitoyl cysteine intermediate. A helical transmembrane segment spans residues 499 to 519 (FLLFVLFLIGGIILFIRLTIA). Residues 520-553 (YIQQNAPEYIPTPNPGLTTCDISTTLCQAGDFDP) lie on the Lumenal side of the membrane. Residues 554 to 574 (FLLCMALWSTLQLTWTSVLAI) traverse the membrane as a helical segment. The Cytoplasmic portion of the chain corresponds to 575–776 (SHLWQVSRQM…RYEVVSEQEV (202 aa)). The disordered stretch occupies residues 628–665 (GAGEEAAGPPGAEAGPEGNALLPPPGGHVHGPQCRHGD). Low complexity predominate over residues 629 to 645 (AGEEAAGPPGAEAGPEG).

It belongs to the DHHC palmitoyltransferase family. AKR/ZDHHC17 subfamily.

The protein localises to the early endosome membrane. It localises to the golgi apparatus membrane. It carries out the reaction L-cysteinyl-[protein] + hexadecanoyl-CoA = S-hexadecanoyl-L-cysteinyl-[protein] + CoA. Palmitoyltransferase specific for casein kinase 1. This is Palmitoyltransferase AKR1 (AKR1) from Cryptococcus neoformans var. neoformans serotype D (strain B-3501A) (Filobasidiella neoformans).